We begin with the raw amino-acid sequence, 121 residues long: MTQSTEDTLLRLAAVIDSRKGGDPDQSYVSRLFHKGDDAVLKKIGEEATEVVLAAKDVRQGGAPTALVGEVADLWFHCLVMLSHFDLSPADVIAELERREGLSGIEEKALRKRREREENGG.

The protein belongs to the PRA-PH family.

It localises to the cytoplasm. The enzyme catalyses 1-(5-phospho-beta-D-ribosyl)-ATP + H2O = 1-(5-phospho-beta-D-ribosyl)-5'-AMP + diphosphate + H(+). Its pathway is amino-acid biosynthesis; L-histidine biosynthesis; L-histidine from 5-phospho-alpha-D-ribose 1-diphosphate: step 2/9. The protein is Phosphoribosyl-ATP pyrophosphatase of Burkholderia cenocepacia (strain ATCC BAA-245 / DSM 16553 / LMG 16656 / NCTC 13227 / J2315 / CF5610) (Burkholderia cepacia (strain J2315)).